The sequence spans 232 residues: Enolase-phosphatase E1 (232 aa).

This sequence belongs to the HAD-like hydrolase superfamily. MasA/MtnC family. Monomer. Requires Mg(2+) as cofactor.

It carries out the reaction 5-methylsulfanyl-2,3-dioxopentyl phosphate + H2O = 1,2-dihydroxy-5-(methylsulfanyl)pent-1-en-3-one + phosphate. It functions in the pathway amino-acid biosynthesis; L-methionine biosynthesis via salvage pathway; L-methionine from S-methyl-5-thio-alpha-D-ribose 1-phosphate: step 3/6. Its pathway is amino-acid biosynthesis; L-methionine biosynthesis via salvage pathway; L-methionine from S-methyl-5-thio-alpha-D-ribose 1-phosphate: step 4/6. In terms of biological role, bifunctional enzyme that catalyzes the enolization of 2,3-diketo-5-methylthiopentyl-1-phosphate (DK-MTP-1-P) into the intermediate 2-hydroxy-3-keto-5-methylthiopentenyl-1-phosphate (HK-MTPenyl-1-P), which is then dephosphorylated to form the acireductone 1,2-dihydroxy-3-keto-5-methylthiopentene (DHK-MTPene). This chain is Enolase-phosphatase E1, found in Acidiphilium cryptum (strain JF-5).